A 473-amino-acid chain; its full sequence is LETM1 domain-containing protein mdm28, mitochondrial (473 aa).

The N-terminal 73 residues, 1–73 (MLRNRLFKTP…FYNIGSSRLY (73 aa)), are a transit peptide targeting the mitochondrion. At 74-161 (STETPTPSKV…LTRTLKDIGR (88 aa)) the chain is on the mitochondrial intermembrane side. Residues 162-182 (LVPFSVFVVVPFAELLLPIAV) form a helical membrane-spanning segment. Residues 183–473 (KLFPNLLPST…ESNIPKNERK (291 aa)) are Mitochondrial matrix-facing. One can recognise a Letm1 RBD domain in the interval 205-398 (QLRKTRNEVS…LQDTLASIPD (194 aa)). Residues 430-473 (EEEAEHVAEHPDLAKKQTEENKATSKPAVSAKSPESNIPKNERK) are disordered. A compositionally biased stretch (basic and acidic residues) spans 434–452 (EHVAEHPDLAKKQTEENKA). The span at 462–473 (SPESNIPKNERK) shows a compositional bias: polar residues.

It localises to the mitochondrion inner membrane. Involved in mitochondrial potassium homeostasis through the mitochondrial K(+)/H(+) exchange regulation. This Schizosaccharomyces pombe (strain 972 / ATCC 24843) (Fission yeast) protein is LETM1 domain-containing protein mdm28, mitochondrial (mdm28).